The following is a 341-amino-acid chain: MLADAAPLDSIRHLIGKMPPASERAAAAARARQAELTKPQGSLGRLEEIAAFLASWQGKPSPTLDRPLVAVFAANHGVVAKGVSAYPPSVTRAMMQNFSAGGAAINQICGAFGVGLKVFELALDIPTKDITEEPAMEAAETAATFAFGMEAIDGGVDLLCVGEMGIGNTTVAAAIFYALYGGSAADWVGRGAGVEGEALARKMAAVETAVALHRPFLSDPLEVMRRLGGREIAAMAGAIVAARMQNIPVVLDGYVVCAAAAILHAVDKSALDHCLAGHLSAEGAHGEVLRRLGKIPLLDLGMRLGEGSGAALAVGLIKAAVACHTGMATFAEAQVAGKVGG.

The active-site Proton acceptor is the E306.

This sequence belongs to the CobT family.

It catalyses the reaction 5,6-dimethylbenzimidazole + nicotinate beta-D-ribonucleotide = alpha-ribazole 5'-phosphate + nicotinate + H(+). It participates in nucleoside biosynthesis; alpha-ribazole biosynthesis; alpha-ribazole from 5,6-dimethylbenzimidazole: step 1/2. Functionally, catalyzes the synthesis of alpha-ribazole-5'-phosphate from nicotinate mononucleotide (NAMN) and 5,6-dimethylbenzimidazole (DMB). The sequence is that of Nicotinate-nucleotide--dimethylbenzimidazole phosphoribosyltransferase from Methylocella silvestris (strain DSM 15510 / CIP 108128 / LMG 27833 / NCIMB 13906 / BL2).